A 188-amino-acid polypeptide reads, in one-letter code: Large ribosomal subunit protein eL18 (188 aa).

The segment at 147–188 (EAEKHFGPAPGVPHSHTKPYVRSKGRKFERARGRRASRAYKN) is disordered. Composition is skewed to basic residues over residues 161–171 (SHTKPYVRSKG) and 178–188 (RGRRASRAYKN).

It belongs to the eukaryotic ribosomal protein eL18 family.

It localises to the cytoplasm. In Caenorhabditis elegans, this protein is Large ribosomal subunit protein eL18 (rpl-18).